Here is a 210-residue protein sequence, read N- to C-terminus: Ribosomal RNA large subunit methyltransferase E (210 aa).

Residues Gly-67, Trp-69, Asp-87, Asp-103, and Asp-128 each coordinate S-adenosyl-L-methionine. Residue Lys-168 is the Proton acceptor of the active site.

This sequence belongs to the class I-like SAM-binding methyltransferase superfamily. RNA methyltransferase RlmE family.

It localises to the cytoplasm. The enzyme catalyses uridine(2552) in 23S rRNA + S-adenosyl-L-methionine = 2'-O-methyluridine(2552) in 23S rRNA + S-adenosyl-L-homocysteine + H(+). Functionally, specifically methylates the uridine in position 2552 of 23S rRNA at the 2'-O position of the ribose in the fully assembled 50S ribosomal subunit. The chain is Ribosomal RNA large subunit methyltransferase E from Psychrobacter arcticus (strain DSM 17307 / VKM B-2377 / 273-4).